The following is a 481-amino-acid chain: Ribosomal RNA small subunit methyltransferase F (481 aa).

S-adenosyl-L-methionine is bound by residues 119 to 125 (ASAPGSK), glutamate 143, aspartate 170, and aspartate 188. The active-site Nucleophile is the cysteine 241.

Belongs to the class I-like SAM-binding methyltransferase superfamily. RsmB/NOP family.

It localises to the cytoplasm. It catalyses the reaction cytidine(1407) in 16S rRNA + S-adenosyl-L-methionine = 5-methylcytidine(1407) in 16S rRNA + S-adenosyl-L-homocysteine + H(+). Functionally, specifically methylates the cytosine at position 1407 (m5C1407) of 16S rRNA. The protein is Ribosomal RNA small subunit methyltransferase F of Shewanella sp. (strain MR-4).